A 104-amino-acid chain; its full sequence is Protein RnfH (104 aa).

The protein belongs to the UPF0125 (RnfH) family.

This is Protein RnfH from Pseudomonas savastanoi pv. phaseolicola (strain 1448A / Race 6) (Pseudomonas syringae pv. phaseolicola (strain 1448A / Race 6)).